Here is a 309-residue protein sequence, read N- to C-terminus: Wall-associated proteinase (309 aa).

N-linked (GlcNAc...) asparagine glycans are attached at residues Asn190 and Asn295.

Its subcellular location is the secreted. The protein localises to the cell wall. It is found in the membrane. May participate in wall plasticization and/or intussusception or in cell wall turnover. The sequence is that of Wall-associated proteinase from Coccidioides posadasii (strain RMSCC 757 / Silveira) (Valley fever fungus).